A 337-amino-acid polypeptide reads, in one-letter code: MRLTASAIAGQFGLTVLGDGSTEVSGVATLAHAGAGQLSFLSNPRYRPQLADSQAAVVVLRADDAEAAKGTALVAKDPYTAFAKIAALFDVAPVCEPGIHPSAVIDPTAQVSPGAHVGPFVSIGARSRVGDGCVIGTGSLIGADCVVDDGSELLARVTLVTRVRLGKRVRIHPGAVIGADGFGLAMDAGHWIKVPQLGGVVIGDDCEIGANTCIDRGALEDTVLEEDVRVDNLVQIAHNCRIGAHSAIAGCSGIAGSAKIGRYCLLGGHVGVVGHLEICDKVVITGKSVVRNSIHEPGEYSSGTPLTDNRTWRKNAARFKQLDVLARRILAVGKEKE.

Residue H238 is the Proton acceptor of the active site.

This sequence belongs to the transferase hexapeptide repeat family. LpxD subfamily. In terms of assembly, homotrimer.

It carries out the reaction a UDP-3-O-[(3R)-3-hydroxyacyl]-alpha-D-glucosamine + a (3R)-hydroxyacyl-[ACP] = a UDP-2-N,3-O-bis[(3R)-3-hydroxyacyl]-alpha-D-glucosamine + holo-[ACP] + H(+). Its pathway is bacterial outer membrane biogenesis; LPS lipid A biosynthesis. Its function is as follows. Catalyzes the N-acylation of UDP-3-O-acylglucosamine using 3-hydroxyacyl-ACP as the acyl donor. Is involved in the biosynthesis of lipid A, a phosphorylated glycolipid that anchors the lipopolysaccharide to the outer membrane of the cell. In Xanthomonas oryzae pv. oryzae (strain KACC10331 / KXO85), this protein is UDP-3-O-acylglucosamine N-acyltransferase.